Here is a 337-residue protein sequence, read N- to C-terminus: Inositol 2-dehydrogenase (337 aa).

It belongs to the Gfo/Idh/MocA family. In terms of assembly, homotetramer.

It carries out the reaction myo-inositol + NAD(+) = scyllo-inosose + NADH + H(+). Functionally, involved in the oxidation of myo-inositol (MI) to 2-keto-myo-inositol (2KMI or 2-inosose). The protein is Inositol 2-dehydrogenase of Gluconacetobacter diazotrophicus (strain ATCC 49037 / DSM 5601 / CCUG 37298 / CIP 103539 / LMG 7603 / PAl5).